Reading from the N-terminus, the 205-residue chain is Regulatory protein RecX (205 aa).

This sequence belongs to the RecX family.

It is found in the cytoplasm. Its function is as follows. Modulates RecA activity. In Finegoldia magna (strain ATCC 29328 / DSM 20472 / WAL 2508) (Peptostreptococcus magnus), this protein is Regulatory protein RecX.